A 562-amino-acid chain; its full sequence is Oligo-1,6-glucosidase (562 aa).

Residues D21, N23, D25, and D29 each coordinate Ca(2+). The Nucleophile role is filled by D199. The Proton donor role is filled by E256.

The protein belongs to the glycosyl hydrolase 13 family.

Its subcellular location is the cytoplasm. It catalyses the reaction Hydrolysis of (1-&gt;6)-alpha-D-glucosidic linkages in some oligosaccharides produced from starch and glycogen by alpha-amylase, and in isomaltose.. The sequence is that of Oligo-1,6-glucosidase (malL) from Parageobacillus thermoglucosidasius (Geobacillus thermoglucosidasius).